A 474-amino-acid chain; its full sequence is PRAME family member 1 (474 aa).

An LRR 1; degenerate repeat occupies 97-124 (RWKLQVLDLRDVDENFWARWPGAWALSC). An LRR 2; degenerate repeat occupies 179 to 203 (HLCCSKLVNYLTPIKYLRKSLKIIY). The LRR 3; degenerate repeat unit spans residues 204–230 (LNSIQELEIRNMSWPRLIRKLRCYLKE). The LRR 4; degenerate repeat unit spans residues 231 to 265 (MKNLRKLVFSRCHHYTSDNELEGRLVAKFSSVFLR). 5 LRR repeats span residues 266–291 (LEHL…IRCL), 292–323 (QNPL…GYLK), 324–342 (HLNL…PLGA), 348–375 (AASL…GLSR), and 376–400 (CSQL…LLRH).

Belongs to the PRAME family.

This is PRAME family member 1 from Homo sapiens (Human).